A 444-amino-acid polypeptide reads, in one-letter code: Glucarate dehydratase (444 aa).

Residues H30, T101, Y148, and K203 each contribute to the substrate site. The active-site Proton acceptor is the K205. D233, E264, and N287 together coordinate Mg(2+). 233–235 lines the substrate pocket; the sequence is DPN. Residues N287, 337–339, H366, and R420 each bind substrate; that span reads HSN. H337 (proton acceptor) is an active-site residue.

Belongs to the mandelate racemase/muconate lactonizing enzyme family. GlucD subfamily. The cofactor is Mg(2+).

It carries out the reaction D-glucarate = 5-dehydro-4-deoxy-D-glucarate + H2O. It participates in carbohydrate acid metabolism; D-glucarate degradation; 2,5-dioxopentanoate from D-glucarate: step 1/2. Catalyzes the dehydration of glucarate to 5-keto-4-deoxy-D-glucarate (5-kdGluc). This is Glucarate dehydratase (gudD) from Acinetobacter baylyi (strain ATCC 33305 / BD413 / ADP1).